A 474-amino-acid chain; its full sequence is L-arabinose isomerase (474 aa).

Residues Glu306, Glu331, His348, and His447 each coordinate Mn(2+).

This sequence belongs to the arabinose isomerase family. The cofactor is Mn(2+).

It carries out the reaction beta-L-arabinopyranose = L-ribulose. It functions in the pathway carbohydrate degradation; L-arabinose degradation via L-ribulose; D-xylulose 5-phosphate from L-arabinose (bacterial route): step 1/3. Its function is as follows. Catalyzes the conversion of L-arabinose to L-ribulose. This is L-arabinose isomerase from Lactiplantibacillus plantarum (strain ATCC BAA-793 / NCIMB 8826 / WCFS1) (Lactobacillus plantarum).